Here is a 363-residue protein sequence, read N- to C-terminus: Putative glutamate--cysteine ligase 2-3 (363 aa).

This sequence belongs to the glutamate--cysteine ligase type 2 family. YbdK subfamily.

It carries out the reaction L-cysteine + L-glutamate + ATP = gamma-L-glutamyl-L-cysteine + ADP + phosphate + H(+). Its function is as follows. ATP-dependent carboxylate-amine ligase which exhibits weak glutamate--cysteine ligase activity. The polypeptide is Putative glutamate--cysteine ligase 2-3 (Rubrobacter xylanophilus (strain DSM 9941 / JCM 11954 / NBRC 16129 / PRD-1)).